Here is a 1098-residue protein sequence, read N- to C-terminus: Mediator of RNA polymerase II transcription subunit 5 (1098 aa).

A disordered region spans residues 1019–1041 (PDDVQKSADMKPDTGIKEDDSEK). Residues 1021–1041 (DVQKSADMKPDTGIKEDDSEK) show a composition bias toward basic and acidic residues.

Belongs to the Mediator complex subunit 5 family. Component of the Mediator complex.

It is found in the nucleus. Its function is as follows. Component of the Mediator complex, a coactivator involved in the regulated transcription of nearly all RNA polymerase II-dependent genes. Mediator functions as a bridge to convey information from gene-specific regulatory proteins to the basal RNA polymerase II transcription machinery. Mediator is recruited to promoters by direct interactions with regulatory proteins and serves as a scaffold for the assembly of a functional preinitiation complex with RNA polymerase II and the general transcription factors. In Eremothecium gossypii (strain ATCC 10895 / CBS 109.51 / FGSC 9923 / NRRL Y-1056) (Yeast), this protein is Mediator of RNA polymerase II transcription subunit 5 (NUT1).